Reading from the N-terminus, the 257-residue chain is MAGGTALTPTSVGSKSVPMRNHEATERGNTNNNLRALPKAVQPVSSIEGEMAKRPRGRPAGSKNKPKPPIIVTHDSPNSLRANAVEISSGCDICETLSDFARRKQRGLCILSANGCVTNVTLRQPASSGAIVTLHGRYEILSLLGSILPPPAPLGITGLTIYLAGPQGQVVGGGVVGGLIASGPVVLMAASFMNAVFDRLPMDDDEAASMQNQQYYQNGRSRPLDDIHGLPQNLLTNGNSASDIYSWGPAQRVMSKP.

Positions 1 to 71 (MAGGTALTPT…SKNKPKPPII (71 aa)) are disordered. Positions 53–65 (KRPRGRPAGSKNK) form a DNA-binding region, a.T hook. The PPC domain maps to 77–214 (PNSLRANAVE…DEAASMQNQQ (138 aa)).

In terms of assembly, interacts with FVE/MSI4 and MSI5 which are components of HDAC corepressor complexes. In terms of tissue distribution, preferentially expressed in the inflorescence meristem and young floral buds, as well as in seedling-stage vegetative meristems. Widely expressed in flowers, roots and stems, with relatively low expression in leaves.

It localises to the nucleus. Functionally, transcription factor that specifically binds AT-rich DNA sequences related to the nuclear matrix attachment regions (MARs). Encodes a nuclear matrix protein that acts in the maintenance of genomic integrity by silencing TEs and repeat-containing genes through epigenetic machinery. Acts as a chromatin remodeling factor that modifies the architecture of FLC and FWA chromatin by modulating both H3 acetylation and methylation leading to the regulation of FLC and FWA expression. Negatively regulates floral repressors including MAF4 and MAF5. Plays a transcription activation role in anther development. Regulates the expression of arabinogalactan proteins (AGPs) involved in the formation of the nexine layer of the pollen wall. Binds AGP6, AGP11, AGP23 and AGP40 promoters. This chain is AT-hook motif nuclear-localized protein 16, found in Arabidopsis thaliana (Mouse-ear cress).